A 365-amino-acid polypeptide reads, in one-letter code: MLIYLFEWLSHYFKGLEVFSSYISVRIIMISITSLLITLALGRPMISWLQRMQIGQIVRDDGPQSHFSKRNTPTMGGVLILSSVIISCLLWGDLTSIYLWILILVVIFFGAIGFFDDYLKLVLKHPKGLRAKHKFALQSIFSIVLAIVLFYLLSKNGQMSLSIPFSKSLYIPMGIVIFVVLAFFIINGSSNAVNLTDGLDGLAIVPVVLVAAGLGIYAYIETNSTLANYLLFNYLGNPGLAEVAVFCAAVCGSGLAFLWFNSHPAEVFMGDVGSLTLGAVLGVIAVMVRQELIFFIMGLLFVVEALSVMLQVGSYKLRNGKRIFRMAPIHHHFELKGWPETKVVIRFWIISLILFLIGLAAIKVR.

10 helical membrane-spanning segments follow: residues Tyr-22–Gly-42, Thr-74–Leu-94, Thr-95–Phe-115, Lys-134–Ser-154, Ser-168–Gly-188, Gly-201–Glu-221, Leu-240–Phe-260, Val-267–Met-287, Leu-292–Val-312, and Lys-342–Ile-362.

This sequence belongs to the glycosyltransferase 4 family. MraY subfamily. Mg(2+) serves as cofactor.

Its subcellular location is the cell inner membrane. It catalyses the reaction UDP-N-acetyl-alpha-D-muramoyl-L-alanyl-gamma-D-glutamyl-meso-2,6-diaminopimeloyl-D-alanyl-D-alanine + di-trans,octa-cis-undecaprenyl phosphate = di-trans,octa-cis-undecaprenyl diphospho-N-acetyl-alpha-D-muramoyl-L-alanyl-D-glutamyl-meso-2,6-diaminopimeloyl-D-alanyl-D-alanine + UMP. It functions in the pathway cell wall biogenesis; peptidoglycan biosynthesis. Catalyzes the initial step of the lipid cycle reactions in the biosynthesis of the cell wall peptidoglycan: transfers peptidoglycan precursor phospho-MurNAc-pentapeptide from UDP-MurNAc-pentapeptide onto the lipid carrier undecaprenyl phosphate, yielding undecaprenyl-pyrophosphoryl-MurNAc-pentapeptide, known as lipid I. This chain is Phospho-N-acetylmuramoyl-pentapeptide-transferase, found in Francisella tularensis subsp. novicida (strain U112).